A 1216-amino-acid polypeptide reads, in one-letter code: Histone-lysine N-methyltransferase SETDB1-B (1216 aa).

The stretch at 38–61 forms a coiled coil; it reads KADLEQLQEWVEQREKEVADIDAL. 2 consecutive Tudor domains span residues 266–329 and 356–412; these read RLFV…LKKT and LLKP…NLKM. The segment at 417–513 is disordered; sequence SQEKKMAGQQ…QGMPSDLQPK (97 aa). The span at 467–478 shows a compositional bias: pro residues; the sequence is PVAPQPAGPPQP. A compositionally biased stretch (polar residues) spans 482 to 498; that stretch reads ESPSFKSQMAKKSTGQL. Positions 595 to 666 constitute an MBD domain; it reads HRGRNPLLTP…EMFCLDPYVL (72 aa). The Pre-SET domain occupies 728–801; it reads VGCDCTDGCR…MCTNRLVQHG (74 aa). Cys-730, Cys-732, Cys-736, Cys-742, Cys-744, Cys-782, Cys-786, Cys-788, and Cys-793 together coordinate Zn(2+). In terms of domain architecture, SET spans 804–1179; sequence VRLQLFKTQN…AGTELTWDYN (376 aa). S-adenosyl-L-methionine-binding positions include 814-816, Asp-852, and Tyr-854; that span reads KGW. 3 disordered regions span residues 892–944, 961–1057, and 1081–1108; these read LPAS…DTFV, RRQA…KTQA, and KSGG…NGPK. A compositionally biased stretch (acidic residues) spans 918 to 940; sequence DSSEESDDEKDDDSNEDDSDSSD. 2 stretches are compositionally biased toward basic and acidic residues: residues 966 to 976 and 983 to 997; these read GLKEESQDSKD and GEDR…ETGK. Residues 1003–1016 are compositionally biased toward polar residues; sequence WLTNQSSTSANQSV. Composition is skewed to basic and acidic residues over residues 1020 to 1029 and 1046 to 1055; these read GGIKTEKKDV and DDNKEREKKT. A compositionally biased stretch (gly residues) spans 1082–1105; that stretch reads SGGGGAGGGGSGPSHGHGGGGGDN. S-adenosyl-L-methionine-binding positions include Arg-1133 and 1136–1137; that span reads NH. Zn(2+) is bound by residues Cys-1139, Cys-1192, Cys-1194, and Cys-1199. In terms of domain architecture, Post-SET spans 1188-1204; sequence KELLCCCGSTECRGRLL.

It belongs to the class V-like SAM-binding methyltransferase superfamily. Histone-lysine methyltransferase family. Suvar3-9 subfamily.

The protein resides in the nucleus. It localises to the chromosome. The catalysed reaction is L-lysyl(4)-[histone H3] + 3 S-adenosyl-L-methionine = N(6),N(6),N(6)-trimethyl-L-lysyl(4)-[histone H3] + 3 S-adenosyl-L-homocysteine + 3 H(+). Functionally, histone methyltransferase that specifically trimethylates 'Lys-9' of histone H3. H3 'Lys-9' trimethylation represents a specific tag for epigenetic transcriptional repression by recruiting HP1 (CBX1, CBX3 and/or CBX5) proteins to methylated histones. Mainly functions in euchromatin regions, thereby playing a central role in the silencing of euchromatic genes. H3 'Lys-9' trimethylation is coordinated with DNA methylation. Plays a role in promoter hypermethylation and transcriptional silencing of tumor suppressor genes (TSGs) or other tumor-related genes. Also required to maintain a transcriptionally repressive state of genes in undifferentiated embryonic stem cells (ESCs). Associates at promoter regions of tumor suppressor genes (TSGs) leading to their gene silencing. The chain is Histone-lysine N-methyltransferase SETDB1-B (setdb1b) from Danio rerio (Zebrafish).